A 646-amino-acid polypeptide reads, in one-letter code: Zinc finger protein 493 (646 aa).

The C2H2-type 1; degenerate zinc finger occupies 26–48 (FQCDKYVKVFHKLLNSNRHNTKH). 2 consecutive C2H2-type zinc fingers follow at residues 54–76 (FKCKKCGKSFCMLLHLCQHKRIH) and 82–104 (YRCEECGKAFIWFSTLTRHRRVH). The segment at 109-131 (SYKYECGKSFNQDSNLTTHKRIH) adopts a C2H2-type 4; degenerate zinc-finger fold. Residues 137–159 (YKCEECGTSFYQFSYLTRHKLIH) form a C2H2-type 5 zinc finger. The C2H2-type 6; degenerate zinc-finger motif lies at 165–187 (YKCEQYGKTFNQSSTLTGHKIIH). The segment at 193–215 (YKCEECGKAFSIFSTPTKHKIIH) adopts a C2H2-type 7; degenerate zinc-finger fold. The C2H2-type 8; degenerate zinc-finger motif lies at 221-243 (HRCEEYCKAYKESSHLTTHKRIH). C2H2-type zinc fingers lie at residues 249–271 (YKCEECGKAFSIFSTLTKHKIIH), 277–299 (HRCEECGKAYKESSHLTTHKRIH), 305–327 (YKCEECGKTFSVFSILTKHKIIH), 333–355 (YKCEECGKAFKRSSTLTKHRIIH), 361–383 (YKCEECGKAFNQSSTLSIHKIIH), 389–411 (YKCEECGKAFKRSSTLTIHKMIH), 417–439 (YKCEECGKAFNRSSHLTTHKRIH), 445–467 (YKCKECGKSFSVFSTLTKHKIIH), 473–495 (YKCEECGKAFNRSSILSIHKKIH), 501–523 (YKCEECGKAFKRSSHLAGHKQIH), 529–551 (YKCEECGKAFSIFSTLTKHKIIH), 557–579 (YKCEKCGKTFYRFSNLNTHKIIH), 585–607 (CKCEECGKAFNHSSNLIKHKLIH), and 613–635 (YKCEACGKAFRRSSHLSRHKIIH).

Its subcellular location is the nucleus. May be involved in transcriptional regulation. The sequence is that of Zinc finger protein 493 (ZNF493) from Homo sapiens (Human).